Here is a 1379-residue protein sequence, read N- to C-terminus: DNA-directed RNA polymerase subunit beta (1379 aa).

This sequence belongs to the RNA polymerase beta chain family. In terms of assembly, the RNAP catalytic core consists of 2 alpha, 1 beta, 1 beta' and 1 omega subunit. When a sigma factor is associated with the core the holoenzyme is formed, which can initiate transcription.

The enzyme catalyses RNA(n) + a ribonucleoside 5'-triphosphate = RNA(n+1) + diphosphate. In terms of biological role, DNA-dependent RNA polymerase catalyzes the transcription of DNA into RNA using the four ribonucleoside triphosphates as substrates. The sequence is that of DNA-directed RNA polymerase subunit beta from Rhizobium etli (strain ATCC 51251 / DSM 11541 / JCM 21823 / NBRC 15573 / CFN 42).